The sequence spans 82 residues: Small ribosomal subunit protein bS18 (82 aa).

The segment at 1-20 (MSEINQTVTRRPFHRRRKTC) is disordered.

Belongs to the bacterial ribosomal protein bS18 family. In terms of assembly, part of the 30S ribosomal subunit. Forms a tight heterodimer with protein bS6.

Functionally, binds as a heterodimer with protein bS6 to the central domain of the 16S rRNA, where it helps stabilize the platform of the 30S subunit. This Bartonella quintana (strain Toulouse) (Rochalimaea quintana) protein is Small ribosomal subunit protein bS18.